The following is a 475-amino-acid chain: Sulfate adenylyltransferase subunit 1 (475 aa).

The tr-type G domain occupies 25-239; it reads KSLLRFLTCG…EVLETVEIQR (215 aa). The segment at 34–41 is G1; that stretch reads GSVDDGKS. A GTP-binding site is contributed by 34–41; sequence GSVDDGKS. A G2 region spans residues 92 to 96; that stretch reads GITID. The G3 stretch occupies residues 113–116; that stretch reads DTPG. GTP contacts are provided by residues 113-117 and 168-171; these read DTPGH and NKMD. Positions 168-171 are G4; it reads NKMD. A G5 region spans residues 206–208; it reads SAL.

This sequence belongs to the TRAFAC class translation factor GTPase superfamily. Classic translation factor GTPase family. CysN/NodQ subfamily. Heterodimer composed of CysD, the smaller subunit, and CysN.

It carries out the reaction sulfate + ATP + H(+) = adenosine 5'-phosphosulfate + diphosphate. Its pathway is sulfur metabolism; hydrogen sulfide biosynthesis; sulfite from sulfate: step 1/3. Functionally, with CysD forms the ATP sulfurylase (ATPS) that catalyzes the adenylation of sulfate producing adenosine 5'-phosphosulfate (APS) and diphosphate, the first enzymatic step in sulfur assimilation pathway. APS synthesis involves the formation of a high-energy phosphoric-sulfuric acid anhydride bond driven by GTP hydrolysis by CysN coupled to ATP hydrolysis by CysD. This Shigella boydii serotype 18 (strain CDC 3083-94 / BS512) protein is Sulfate adenylyltransferase subunit 1.